We begin with the raw amino-acid sequence, 245 residues long: tRNA1(Val) (adenine(37)-N6)-methyltransferase (245 aa).

The protein belongs to the methyltransferase superfamily. tRNA (adenine-N(6)-)-methyltransferase family.

Its subcellular location is the cytoplasm. The catalysed reaction is adenosine(37) in tRNA1(Val) + S-adenosyl-L-methionine = N(6)-methyladenosine(37) in tRNA1(Val) + S-adenosyl-L-homocysteine + H(+). Specifically methylates the adenine in position 37 of tRNA(1)(Val) (anticodon cmo5UAC). This Salmonella typhi protein is tRNA1(Val) (adenine(37)-N6)-methyltransferase.